A 253-amino-acid polypeptide reads, in one-letter code: Ribosomal RNA small subunit methyltransferase G (253 aa).

S-adenosyl-L-methionine is bound by residues G84, L89, 136–137, and R155; that span reads IE.

The protein belongs to the methyltransferase superfamily. RNA methyltransferase RsmG family.

It localises to the cytoplasm. Functionally, specifically methylates the N7 position of a guanine in 16S rRNA. This Prochlorococcus marinus (strain SARG / CCMP1375 / SS120) protein is Ribosomal RNA small subunit methyltransferase G.